The sequence spans 87 residues: Alpha-elapitoxin-Ls2a (87 aa).

The N-terminal stretch at 1–21 (MKTLLLTLVVVTIVCLDLGYT) is a signal peptide. 5 disulfides stabilise this stretch: Cys-24–Cys-41, Cys-34–Cys-62, Cys-47–Cys-51, Cys-66–Cys-77, and Cys-78–Cys-83.

The protein belongs to the three-finger toxin family. Long-chain subfamily. Type II alpha-neurotoxin sub-subfamily. Expressed by the venom gland.

It is found in the secreted. In terms of biological role, binds with high affinity to muscular (tested on Torpedo marmorata, Kd=1.6 nM) and neuronal (chimeric alpha-7/CHRNA7, Kd=3 nM) nicotinic acetylcholine receptor (nAChR) and inhibits acetylcholine from binding to the receptor, thereby impairing neuromuscular and neuronal transmission. Also shows a very weak inhibition on GABA(A) receptors. The toxin (10 uM) inhibits 83% of current in channels composed of alpha-1-beta-3-gamma-2 (GABRA1-GABRB3-GABRG2) subunits, 39% of current in channels composed of alpha-2-beta-2-gamma-2 (GABRA2-GABRB2-GABRG2) subunits, and 33% of current in channels composed of alpha-5-beta-2-gamma-2 (GABRA5-GABRB2-GABRG2) subunits. In Laticauda semifasciata (Black-banded sea krait), this protein is Alpha-elapitoxin-Ls2a.